A 202-amino-acid chain; its full sequence is Energy-coupling factor transporter transmembrane protein BioN (202 aa).

Helical transmembrane passes span 21-40 (LLSLTAFAILLFISHNLLLL), 44-63 (VLVAAVLYGTVGLPIGEALL), and 68-90 (IFLTIAVVALFNLIFNPWQAALV).

The protein belongs to the CbiQ family. In terms of assembly, part of a biotin transporter complex composed of BioM, BioN and BioY.

Its subcellular location is the cell inner membrane. Its function is as follows. Involved in biotin uptake. The chain is Energy-coupling factor transporter transmembrane protein BioN (bioN) from Rhizobium etli (strain ATCC 51251 / DSM 11541 / JCM 21823 / NBRC 15573 / CFN 42).